The following is a 362-amino-acid chain: Heat-inducible transcription repressor HrcA (362 aa).

This sequence belongs to the HrcA family.

Its function is as follows. Negative regulator of class I heat shock genes (grpE-dnaK-dnaJ and groELS operons). Prevents heat-shock induction of these operons. The chain is Heat-inducible transcription repressor HrcA from Rhizobium etli (strain CIAT 652).